The following is a 117-amino-acid chain: Immunoglobulin kappa variable 1D-16 (117 aa).

An N-terminal signal peptide occupies residues 1–22 (MDMRVLAQLLGLLLLCFPGARC). Residues 23–45 (DIQMTQSPSSLSASVGDRVTITC) form a framework-1 region. One can recognise an Ig-like domain in the interval 24-117 (IQMTQSPSSL…YYCQQYNSYP (94 aa)). An intrachain disulfide couples Cys-45 to Cys-110. A complementarity-determining-1 region spans residues 46–56 (RASQGISSWLA). A framework-2 region spans residues 57 to 71 (WYQQKPEKAPKSLIY). The interval 72–78 (AASSLQS) is complementarity-determining-2. Positions 79 to 110 (GVPSRFSGSGSGTDFTLTISSLQPEDFATYYC) are framework-3. The tract at residues 111 to 117 (QQYNSYP) is complementarity-determining-3.

Immunoglobulins are composed of two identical heavy chains and two identical light chains; disulfide-linked.

It localises to the secreted. The protein localises to the cell membrane. V region of the variable domain of immunoglobulin light chains that participates in the antigen recognition. Immunoglobulins, also known as antibodies, are membrane-bound or secreted glycoproteins produced by B lymphocytes. In the recognition phase of humoral immunity, the membrane-bound immunoglobulins serve as receptors which, upon binding of a specific antigen, trigger the clonal expansion and differentiation of B lymphocytes into immunoglobulins-secreting plasma cells. Secreted immunoglobulins mediate the effector phase of humoral immunity, which results in the elimination of bound antigens. The antigen binding site is formed by the variable domain of one heavy chain, together with that of its associated light chain. Thus, each immunoglobulin has two antigen binding sites with remarkable affinity for a particular antigen. The variable domains are assembled by a process called V-(D)-J rearrangement and can then be subjected to somatic hypermutations which, after exposure to antigen and selection, allow affinity maturation for a particular antigen. The chain is Immunoglobulin kappa variable 1D-16 from Homo sapiens (Human).